The chain runs to 232 residues: 5'-methylthioadenosine/S-adenosylhomocysteine nucleosidase (232 aa).

The active-site Proton acceptor is the glutamate 12. Substrate is bound by residues glycine 78, valine 153, and 174 to 175 (ME). Aspartate 198 serves as the catalytic Proton donor.

It belongs to the PNP/UDP phosphorylase family. MtnN subfamily.

It carries out the reaction S-adenosyl-L-homocysteine + H2O = S-(5-deoxy-D-ribos-5-yl)-L-homocysteine + adenine. The catalysed reaction is S-methyl-5'-thioadenosine + H2O = 5-(methylsulfanyl)-D-ribose + adenine. It catalyses the reaction 5'-deoxyadenosine + H2O = 5-deoxy-D-ribose + adenine. Its pathway is amino-acid biosynthesis; L-methionine biosynthesis via salvage pathway; S-methyl-5-thio-alpha-D-ribose 1-phosphate from S-methyl-5'-thioadenosine (hydrolase route): step 1/2. Catalyzes the irreversible cleavage of the glycosidic bond in both 5'-methylthioadenosine (MTA) and S-adenosylhomocysteine (SAH/AdoHcy) to adenine and the corresponding thioribose, 5'-methylthioribose and S-ribosylhomocysteine, respectively. Also cleaves 5'-deoxyadenosine, a toxic by-product of radical S-adenosylmethionine (SAM) enzymes, into 5-deoxyribose and adenine. This chain is 5'-methylthioadenosine/S-adenosylhomocysteine nucleosidase, found in Photobacterium profundum (strain SS9).